The following is a 708-amino-acid chain: Glutamate--tRNA ligase, cytoplasmic (708 aa).

Interaction with ARC1 regions lie at residues 106–115 and 141–157; these read NLRTFILGGL and KVDVNVSRWYTLLEMDP. Residue 205–207 participates in L-glutamate binding; that stretch reads RFP. The 'HIGH' region signature appears at 210-219; it reads PSGYLHIGHA. An ATP-binding site is contributed by histidine 215. Aspartate 241 contacts L-glutamate. The residue at position 300 (threonine 300) is a Phosphothreonine. Residues 382–386 and arginine 400 each bind L-glutamate; that span reads YDFCV. Residues glutamate 403 and 437 to 441 each bind ATP; that span reads LLSKR. Positions 437–441 match the 'KMSKS' region motif; it reads LLSKR.

Belongs to the class-I aminoacyl-tRNA synthetase family. Glutamate--tRNA ligase type 2 subfamily. In terms of assembly, component of a yeast aminoacyl-tRNA synthase (aaRS) complex formed by methionyl-tRNA synthase MES1, glutamyl-tRNA synthase GUS1 and the tRNA aminoacylation cofactor ARC1 in a stoichiometric complex. Interacts (via N-ter) with ARC1 (via N-ter). Can also form a stable binary complex with ARC1 that is functional in terms of aminoacylation. ARC1 increases the affinity for cognate tRNAs due to the presence of a tRNA binding domain in the middle and C-terminal part of ARC1.

It is found in the cytoplasm. The protein resides in the mitochondrion. The catalysed reaction is tRNA(Glu) + L-glutamate + ATP = L-glutamyl-tRNA(Glu) + AMP + diphosphate. Catalyzes the attachment of glutamate to tRNA(Glu) in a two-step reaction: glutamate is first activated by ATP to form Glu-AMP and then transferred to the acceptor end of tRNA(Glu). In mitochondria, constitutes the nondiscriminating glutamyl-tRNA synthase that generates the mitochondrial mischarged glutamyl-tRNA(Gln) substrate for the tRNA-dependent amidotransferase (AdT), which generates mitochondrial glutaminyl-tRNA(Gln) by transamidation of glutamyl-tRNA(Gln). This Saccharomyces cerevisiae (strain ATCC 204508 / S288c) (Baker's yeast) protein is Glutamate--tRNA ligase, cytoplasmic (GUS1).